The sequence spans 393 residues: Glutamyl-tRNA reductase (393 aa).

Substrate contacts are provided by residues 47-50, Ser98, 103-105, and Gln109; these read TCSR and ETD. Cys48 serves as the catalytic Nucleophile. NADP(+) is bound at residue 177–182; it reads GAGAVG.

It belongs to the glutamyl-tRNA reductase family. As to quaternary structure, homodimer.

It carries out the reaction (S)-4-amino-5-oxopentanoate + tRNA(Glu) + NADP(+) = L-glutamyl-tRNA(Glu) + NADPH + H(+). It functions in the pathway porphyrin-containing compound metabolism; protoporphyrin-IX biosynthesis; 5-aminolevulinate from L-glutamyl-tRNA(Glu): step 1/2. Catalyzes the NADPH-dependent reduction of glutamyl-tRNA(Glu) to glutamate 1-semialdehyde (GSA). The sequence is that of Glutamyl-tRNA reductase from Pyrobaculum neutrophilum (strain DSM 2338 / JCM 9278 / NBRC 100436 / V24Sta) (Thermoproteus neutrophilus).